We begin with the raw amino-acid sequence, 321 residues long: Putative sulfotransferase vep-2 (321 aa).

Residues 11–31 (IARVLIIIASISVICITLFIS) form a helical membrane-spanning segment.

This sequence to C.elegans C41C4.1 and C18B2.2.

Its subcellular location is the membrane. This chain is Putative sulfotransferase vep-2, found in Caenorhabditis elegans.